The following is a 210-amino-acid chain: Large ribosomal subunit protein bL25 (210 aa).

The protein belongs to the bacterial ribosomal protein bL25 family. CTC subfamily. As to quaternary structure, part of the 50S ribosomal subunit; part of the 5S rRNA/L5/L18/L25 subcomplex. Contacts the 5S rRNA. Binds to the 5S rRNA independently of L5 and L18.

In terms of biological role, this is one of the proteins that binds to the 5S RNA in the ribosome where it forms part of the central protuberance. This Frankia casuarinae (strain DSM 45818 / CECT 9043 / HFP020203 / CcI3) protein is Large ribosomal subunit protein bL25.